A 311-amino-acid chain; its full sequence is D-alanine--D-alanine ligase (311 aa).

In terms of domain architecture, ATP-grasp spans 105 to 306 (KQLYIHAGLP…FSALLDRLIE (202 aa)). Residue 133 to 188 (ADRLGLPVVVKPEHEGSSIGLSIVRNRDQLAAAVETGWQYDRRCLIEKYVHGIEIT) coordinates ATP. Residues Asp-261, Glu-273, and Asn-275 each contribute to the Mg(2+) site.

It belongs to the D-alanine--D-alanine ligase family. Mg(2+) serves as cofactor. It depends on Mn(2+) as a cofactor.

The protein localises to the cytoplasm. The enzyme catalyses 2 D-alanine + ATP = D-alanyl-D-alanine + ADP + phosphate + H(+). It functions in the pathway cell wall biogenesis; peptidoglycan biosynthesis. Cell wall formation. The protein is D-alanine--D-alanine ligase of Syntrophobacter fumaroxidans (strain DSM 10017 / MPOB).